An 804-amino-acid chain; its full sequence is Leucine--tRNA ligase (804 aa).

A 'HIGH' region motif is present at residues 40-51; that stretch reads PYPSGAGLHVGH. The 'KMSKS' region motif lies at 576-580; sequence KMSKS. Residue Lys-579 coordinates ATP.

This sequence belongs to the class-I aminoacyl-tRNA synthetase family.

It localises to the cytoplasm. The enzyme catalyses tRNA(Leu) + L-leucine + ATP = L-leucyl-tRNA(Leu) + AMP + diphosphate. The polypeptide is Leucine--tRNA ligase (Staphylococcus aureus (strain Mu3 / ATCC 700698)).